Here is a 307-residue protein sequence, read N- to C-terminus: Ribosomal RNA small subunit methyltransferase H (307 aa).

Residues 33-35, D51, F82, D96, and Q103 contribute to the S-adenosyl-L-methionine site; that span reads GGY.

Belongs to the methyltransferase superfamily. RsmH family.

It localises to the cytoplasm. The catalysed reaction is cytidine(1402) in 16S rRNA + S-adenosyl-L-methionine = N(4)-methylcytidine(1402) in 16S rRNA + S-adenosyl-L-homocysteine + H(+). Its function is as follows. Specifically methylates the N4 position of cytidine in position 1402 (C1402) of 16S rRNA. In Rickettsia rickettsii (strain Iowa), this protein is Ribosomal RNA small subunit methyltransferase H.